Reading from the N-terminus, the 911-residue chain is Desmoglein-1-gamma (911 aa).

Residues 1–23 form the signal peptide; the sequence is MDWHSFRIAALLLTSLVVLEVNS. The propeptide occupies 24 to 49; the sequence is EFQIQVRDHNAKNGTIKWHSIRRQKR. Cadherin domains lie at 50–157, 158–269, and 270–389; these read EWIK…PPVF, SMTT…IPYL, and EQSS…QPGS. Over 50-519 the chain is Extracellular; sequence EWIKFAAACR…PNVDNVHFGP (470 aa). N-linked (GlcNAc...) (high mannose) asparagine glycosylation is present at N110. The N-linked (GlcNAc...) asparagine glycan is linked to N180. N-linked (GlcNAc...) asparagine glycosylation is present at N401. The chain crosses the membrane as a helical span at residues 520-540; the sequence is AGIGLLIMGFLVLGLVPFLLI. Topologically, residues 541-911 are cytoplasmic; the sequence is SCDCGGAPGG…GMIGNLSIPP (371 aa). Desmoglein repeat repeat units lie at residues 783-809, 810-839, 840-869, and 870-897; these read AYPS…TVRE, SYTT…ERVV, GPIS…ERVI, and APGS…ERVI. The stretch at 898 to 911 is one Desmoglein repeat 5; truncated repeat; the sequence is QPTSGMIGNLSIPP.

Interacts with DSC3; there is evidence to suggest that the interaction promotes cell-cell adhesion of keratinocytes. As to expression, expressed in epidermis, brain, liver, skeletal, muscle and testis.

It is found in the cell membrane. Its subcellular location is the cell junction. It localises to the desmosome. The protein resides in the cytoplasm. The protein localises to the nucleus. Component of intercellular desmosome junctions. Involved in the interaction of plaque proteins and intermediate filaments mediating cell-cell adhesion. The protein is Desmoglein-1-gamma (Dsg1c) of Mus musculus (Mouse).